The primary structure comprises 643 residues: Threonine--tRNA ligase (643 aa).

Residues 1 to 61 form the TGS domain; it reads MPIITLPDGS…TEDSKLEIIT (61 aa). Positions 243-534 are catalytic; the sequence is DHRKIGKALD…ITEEYAGFFP (292 aa). The Zn(2+) site is built by C334, H385, and H511.

The protein belongs to the class-II aminoacyl-tRNA synthetase family. Homodimer. It depends on Zn(2+) as a cofactor.

The protein localises to the cytoplasm. The enzyme catalyses tRNA(Thr) + L-threonine + ATP = L-threonyl-tRNA(Thr) + AMP + diphosphate + H(+). Functionally, catalyzes the attachment of threonine to tRNA(Thr) in a two-step reaction: L-threonine is first activated by ATP to form Thr-AMP and then transferred to the acceptor end of tRNA(Thr). Also edits incorrectly charged L-seryl-tRNA(Thr). This chain is Threonine--tRNA ligase, found in Pasteurella multocida (strain Pm70).